The primary structure comprises 664 residues: Degenerin del-1 (664 aa).

Residues 1–67 (MARKYIDILK…IFTTSLYWVR (67 aa)) lie on the Cytoplasmic side of the membrane. A helical transmembrane segment spans residues 68–88 (FLWVVVSLVCICLCMYSFSHV). Over 89–607 (KDKYDRKEKI…WFNLMADMGG (519 aa)) the chain is Extracellular. N-linked (GlcNAc...) asparagine glycans are attached at residues Asn241, Asn300, Asn394, Asn508, and Asn562. Residues 608–628 (QAGLFLGASIMSVIEFLFFAV) form a helical membrane-spanning segment. At 629–664 (RTLGIACKPRRWRQKTELLRAEELNDAEKGVSTNNN) the chain is on the cytoplasmic side.

It belongs to the amiloride-sensitive sodium channel (TC 1.A.6) family.

It localises to the membrane. Functionally, probable sodium channel subunit. This is Degenerin del-1 (del-1) from Caenorhabditis elegans.